The chain runs to 349 residues: Isopentenyl-diphosphate delta-isomerase (349 aa).

6–7 (RK) contacts substrate. FMN contacts are provided by residues 62–64 (AMT), serine 93, and asparagine 122. A substrate-binding site is contributed by glutamine 152. Glutamate 153 provides a ligand contact to Mg(2+). FMN is bound by residues lysine 184, threonine 214, 258-259 (GG), and 280-281 (AG).

Belongs to the IPP isomerase type 2 family. In terms of assembly, homooctamer. Dimer of tetramers. Requires FMN as cofactor. The cofactor is NADPH. Mg(2+) is required as a cofactor.

The protein resides in the cytoplasm. It catalyses the reaction isopentenyl diphosphate = dimethylallyl diphosphate. Functionally, involved in the biosynthesis of isoprenoids. Catalyzes the 1,3-allylic rearrangement of the homoallylic substrate isopentenyl (IPP) to its allylic isomer, dimethylallyl diphosphate (DMAPP). The sequence is that of Isopentenyl-diphosphate delta-isomerase from Bacillus cereus (strain 03BB102).